A 602-amino-acid polypeptide reads, in one-letter code: Isocyanide synthase A (602 aa).

This sequence belongs to the isocyanide synthase family.

Functionally, isocyanide synthase involved in the biosynthesis of isocyanides (or isonitriles), a class of microbial secondary metabolites. The presence of an isonitrile moiety within a compound imparts unique biological (cytotoxic, antibacterial, and antiprotozoal) and chemical (transition metal coordination) properties and enables synthetic and biochemical applications. The protein is Isocyanide synthase A of Aspergillus fumigatus (strain ATCC MYA-4609 / CBS 101355 / FGSC A1100 / Af293) (Neosartorya fumigata).